A 572-amino-acid polypeptide reads, in one-letter code: Light-independent protochlorophyllide reductase subunit N (572 aa).

[4Fe-4S] cluster contacts are provided by cysteine 106, cysteine 131, and cysteine 191. A disordered region spans residues 249–268 (SLDSMKLPSGGREKQINDVN).

This sequence belongs to the BchN/ChlN family. Protochlorophyllide reductase is composed of three subunits; ChlL, ChlN and ChlB. Forms a heterotetramer of two ChlB and two ChlN subunits. Requires [4Fe-4S] cluster as cofactor.

The protein localises to the plastid. It is found in the chloroplast. The catalysed reaction is chlorophyllide a + oxidized 2[4Fe-4S]-[ferredoxin] + 2 ADP + 2 phosphate = protochlorophyllide a + reduced 2[4Fe-4S]-[ferredoxin] + 2 ATP + 2 H2O. It functions in the pathway porphyrin-containing compound metabolism; chlorophyll biosynthesis (light-independent). In terms of biological role, component of the dark-operative protochlorophyllide reductase (DPOR) that uses Mg-ATP and reduced ferredoxin to reduce ring D of protochlorophyllide (Pchlide) to form chlorophyllide a (Chlide). This reaction is light-independent. The NB-protein (ChlN-ChlB) is the catalytic component of the complex. This Oltmannsiellopsis viridis (Marine flagellate) protein is Light-independent protochlorophyllide reductase subunit N.